A 349-amino-acid polypeptide reads, in one-letter code: N-acetyl-gamma-glutamyl-phosphate reductase (349 aa).

The active site involves cysteine 153.

The protein belongs to the NAGSA dehydrogenase family. Type 1 subfamily.

The protein resides in the cytoplasm. The catalysed reaction is N-acetyl-L-glutamate 5-semialdehyde + phosphate + NADP(+) = N-acetyl-L-glutamyl 5-phosphate + NADPH + H(+). The protein operates within amino-acid biosynthesis; L-arginine biosynthesis; N(2)-acetyl-L-ornithine from L-glutamate: step 3/4. Catalyzes the NADPH-dependent reduction of N-acetyl-5-glutamyl phosphate to yield N-acetyl-L-glutamate 5-semialdehyde. The polypeptide is N-acetyl-gamma-glutamyl-phosphate reductase (Magnetococcus marinus (strain ATCC BAA-1437 / JCM 17883 / MC-1)).